We begin with the raw amino-acid sequence, 757 residues long: MDVNPTLLFLKVPAQNAISTTFPYTGDPPYSHGTGTGYTMDTVNRTHQYSERGKWTINTETGAPQLNPIDGPLPEDNEPTGYAQTDCVLEAMAFLEKSHPGIFENSCLETMEVIQQTRVDKLTQGRQTFDWTLNRNQPAATALANTIEVFRLNGLTTSESGRLIDFLKDVMESMDKEEMEIVTHFQRKRRVRDNMTKKMVTQRTIGKKKQKLNKRGYLIRALTLNTMTKDAERGKLKRRAIATPGMQIRGFVYFVETLARSICEKLEQSGLPVGGNEKKAKLANVVRKMMTNSQDTELSFTITGDNTKWNENQNPRMFLAMITYITRNQPEWFRNVLSVAPIMFSNKMARLGKGYMFESKNMKLRTQIPAEMLSGIDLRYFNDSTRKKIEKIRPLLIEGAASLSPGMMMGMFNMLSTVLGVSILNLGQKEYTKTAYWWDGLQSSDDFALIVNAPNHEGIQAGVDRFYRTCKLLGINMSKKKSYINRTGTFEFTSFFYRYGFVANFSMELPSFGVSGINESADMSIGVTVIKNNMINNDLGPATAQMALQLFIKDYRYTYRCHRGDTQIQTRRSFEIKKLWDQTRSKAGLLVSDGGPNLYNIRNLHIPEVCLKWELMDKDYQGRLCNPLNPFVSHKEIESVNNAVVMPSHGPAKTMEYDAVATTHSWVPKRNRSILNTSQRGILEDEQMYQKCCNLFEKFFPSSSYRRPVGISSMVEAMVSRARIDARIDFESGRIKKEDFAEIMKICSTIEDLRRQK.

2 consecutive short sequence motifs (nuclear localization signal) follow at residues R187–M195 and R203–G216. The tract at residues R249–E256 is promoter-binding site. The 198-residue stretch at V286–Y483 folds into the RdRp catalytic domain.

This sequence belongs to the influenza viruses polymerase PB1 family. As to quaternary structure, influenza RNA polymerase is composed of three subunits: PB1, PB2 and PA. Interacts (via N-terminus) with PA (via C-terminus). Interacts (via C-terminus) with PB2 (via N-terminus); this interaction is essential for transcription initiation. Interacts (via C-terminus) with human PKP2 (via N-terminus); the interaction competitively inhibits the interaction between the RNA polymerase subunits PB1 and PB2. Phosphorylated by host PRKCA.

It is found in the host nucleus. Its subcellular location is the host cytoplasm. The catalysed reaction is RNA(n) + a ribonucleoside 5'-triphosphate = RNA(n+1) + diphosphate. Its function is as follows. RNA-dependent RNA polymerase which is responsible for replication and transcription of virus RNA segments. The transcription of viral mRNAs occurs by a unique mechanism called cap-snatching. 5' methylated caps of cellular mRNAs are cleaved after 10-13 nucleotides by PA. In turn, these short capped RNAs are used as primers by PB1 for transcription of viral mRNAs. During virus replication, PB1 initiates RNA synthesis and copy vRNA into complementary RNA (cRNA) which in turn serves as a template for the production of more vRNAs. The polypeptide is RNA-directed RNA polymerase catalytic subunit (Influenza A virus (strain A/Swine/Ontario/2/1981 H1N1)).